We begin with the raw amino-acid sequence, 84 residues long: Small ribosomal subunit protein uS17 (84 aa).

This sequence belongs to the universal ribosomal protein uS17 family. As to quaternary structure, part of the 30S ribosomal subunit.

Functionally, one of the primary rRNA binding proteins, it binds specifically to the 5'-end of 16S ribosomal RNA. In Photorhabdus laumondii subsp. laumondii (strain DSM 15139 / CIP 105565 / TT01) (Photorhabdus luminescens subsp. laumondii), this protein is Small ribosomal subunit protein uS17.